The following is a 477-amino-acid chain: Delayed-rectifier potassium channel regulatory subunit KCNS2 (477 aa).

Over 1-184 (MTRQSLWDVS…LALDNPGYSV (184 aa)) the chain is Cytoplasmic. The chain crosses the membrane as a helical span at residues 185 to 206 (LSRVFSVLSILVVLGSIITMCL). Residues 207–225 (NSLPDFQIPDSQGNPGEDP) lie on the Extracellular side of the membrane. Residues 226 to 248 (RFEIVEHFGIAWFTFELVARFAV) form a helical membrane-spanning segment. Over 249–259 (APDFLKFFKNA) the chain is Cytoplasmic. Residues 260–280 (LNLIDLMSIVPFYITLVVNLV) form a helical membrane-spanning segment. Residues 281–290 (VESSPTLANL) are Extracellular-facing. A helical; Voltage-sensor transmembrane segment spans residues 291–311 (GRVAQVLRLMRIFRILKLARH). Topologically, residues 312–326 (STGLRSLGATLKYSY) are cytoplasmic. Residues 327 to 348 (KEVGLLLLYLSVGISIFSVVAY) traverse the membrane as a helical segment. At 349 to 361 (TIEKEENEGLATI) the chain is on the extracellular side. Residues 362–373 (PACWWWATVSMT) constitute an intramembrane region (helical). A Selectivity filter motif is present at residues 374–379 (TVGYGD). An intramembrane segment occupies 374-381 (TVGYGDVV). Over 382 to 388 (PGTTAGK) the chain is Extracellular. The helical transmembrane segment at 389–417 (LTASACILAGILVVVLPITLIFNKFSHFY) threads the bilayer. The Cytoplasmic portion of the chain corresponds to 418 to 477 (RRQKQLESAMRSCDFGDGMKEVPSVNLRDYYAHKVKSLMASLTNMSRSSPSELSLDDSLH).

The protein belongs to the potassium channel family. S (TC 1.A.1.2) subfamily. Kv9.2/KCNS2 sub-subfamily. As to quaternary structure, heterotetramer with KCNB1 and KCNB2. Does not form homomultimers. Detected in brain, but not in the other tissues tested. Expression was highest in the olfactory bulb, cerebral cortex, hippocampus, habenula, basolateral amygdaloid nuclei and cerebellum.

Its subcellular location is the cell membrane. Functionally, potassium channel regulatory subunit that modulate the delayed rectifier voltage-gated potassium channel activity of KCNB1 and KCNB2 by altering their kinetics, expression levels, and shifting the half-inactivation potential to more polarized values. While it does not form functional channels on its own, it can form functional heterotetrameric channels with KCNB1 and KCNB2. Each regulatory subunit has unique regulatory properties that can lead to extensive inhibition, significant changes in kinetics, and/or substantial shifts in the voltage dependencies of the inactivation process. This is Delayed-rectifier potassium channel regulatory subunit KCNS2 from Mus musculus (Mouse).